The sequence spans 169 residues: Cell division inhibitor SulA (169 aa).

Polar residues predominate over residues 1–16 (MFTSAHANRSPLTSAS). Residues 1 to 20 (MFTSAHANRSPLTSASVRRP) form a disordered region. Residues 106-112 (ALRTGNY) are ftsZ binding. The lon protease binding stretch occupies residues 162 to 169 (KIHSNLYH).

The protein belongs to the SulA family. In terms of assembly, interacts with FtsZ. Is rapidly cleaved and degraded by the Lon protease once DNA damage is repaired.

In terms of biological role, component of the SOS system and an inhibitor of cell division. Accumulation of SulA causes rapid cessation of cell division and the appearance of long, non-septate filaments. In the presence of GTP, binds a polymerization-competent form of FtsZ in a 1:1 ratio, thus inhibiting FtsZ polymerization and therefore preventing it from participating in the assembly of the Z ring. This mechanism prevents the premature segregation of damaged DNA to daughter cells during cell division. This Klebsiella aerogenes (Enterobacter aerogenes) protein is Cell division inhibitor SulA.